The following is a 198-amino-acid chain: Protein-L-isoaspartate O-methyltransferase (198 aa).

Residue Ser50 is part of the active site.

This sequence belongs to the methyltransferase superfamily. L-isoaspartyl/D-aspartyl protein methyltransferase family.

Its subcellular location is the cytoplasm. It carries out the reaction [protein]-L-isoaspartate + S-adenosyl-L-methionine = [protein]-L-isoaspartate alpha-methyl ester + S-adenosyl-L-homocysteine. In terms of biological role, catalyzes the methyl esterification of L-isoaspartyl residues in peptides and proteins that result from spontaneous decomposition of normal L-aspartyl and L-asparaginyl residues. It plays a role in the repair and/or degradation of damaged proteins. The sequence is that of Protein-L-isoaspartate O-methyltransferase from Thermosipho melanesiensis (strain DSM 12029 / CIP 104789 / BI429).